The primary structure comprises 176 residues: NADH-quinone oxidoreductase subunit I 1 (176 aa).

4Fe-4S ferredoxin-type domains are found at residues 45–77 and 87–116; these read IVLTRDPEGGERCVACYLCSAACPVDCISMEAT and RWFRINFSRCIFCGLCAEACPTLAIQMTPD. 8 residues coordinate [4Fe-4S] cluster: cysteine 57, cysteine 60, cysteine 63, cysteine 67, cysteine 96, cysteine 99, cysteine 102, and cysteine 106.

Belongs to the complex I 23 kDa subunit family. In terms of assembly, NDH-1 is composed of 14 different subunits. Subunits NuoA, H, J, K, L, M, N constitute the membrane sector of the complex. It depends on [4Fe-4S] cluster as a cofactor.

It localises to the cell inner membrane. The enzyme catalyses a quinone + NADH + 5 H(+)(in) = a quinol + NAD(+) + 4 H(+)(out). Functionally, NDH-1 shuttles electrons from NADH, via FMN and iron-sulfur (Fe-S) centers, to quinones in the respiratory chain. The immediate electron acceptor for the enzyme in this species is believed to be ubiquinone. Couples the redox reaction to proton translocation (for every two electrons transferred, four hydrogen ions are translocated across the cytoplasmic membrane), and thus conserves the redox energy in a proton gradient. The polypeptide is NADH-quinone oxidoreductase subunit I 1 (Geobacter metallireducens (strain ATCC 53774 / DSM 7210 / GS-15)).